A 329-amino-acid chain; its full sequence is NADH-quinone oxidoreductase subunit H (329 aa).

8 consecutive transmembrane segments (helical) span residues 9–29, 79–99, 117–137, 162–182, 188–208, 243–263, 269–289, and 309–329; these read ILKVLVVVAIFSALAGFLTYV, IAPVISAATAFIAMSAVPFFP, VGILFVLGVGAVGMYGPLLAG, VSGLSILAPLMMVGSLSLIEI, GGIFDWLVWSQPLAFLLFLIA, FFIGEYANMITLAFLVVLLFF, LWFIPGGIAILLKVAVFLFLF, and WKVLMPLALLNIVLTGIVLIL.

The protein belongs to the complex I subunit 1 family. In terms of assembly, NDH-1 is composed of 14 different subunits. Subunits NuoA, H, J, K, L, M, N constitute the membrane sector of the complex.

Its subcellular location is the cell inner membrane. The catalysed reaction is a quinone + NADH + 5 H(+)(in) = a quinol + NAD(+) + 4 H(+)(out). Functionally, NDH-1 shuttles electrons from NADH, via FMN and iron-sulfur (Fe-S) centers, to quinones in the respiratory chain. The immediate electron acceptor for the enzyme in this species is believed to be ubiquinone. Couples the redox reaction to proton translocation (for every two electrons transferred, four hydrogen ions are translocated across the cytoplasmic membrane), and thus conserves the redox energy in a proton gradient. This subunit may bind ubiquinone. In Wolinella succinogenes (strain ATCC 29543 / DSM 1740 / CCUG 13145 / JCM 31913 / LMG 7466 / NCTC 11488 / FDC 602W) (Vibrio succinogenes), this protein is NADH-quinone oxidoreductase subunit H.